Reading from the N-terminus, the 296-residue chain is NAD kinase (296 aa).

The active-site Proton acceptor is aspartate 72. Residues 72–73 (DG), 146–147 (ND), arginine 157, lysine 174, aspartate 176, 187–192 (TAYALS), and glutamine 247 each bind NAD(+).

The protein belongs to the NAD kinase family. Requires a divalent metal cation as cofactor.

It is found in the cytoplasm. It carries out the reaction NAD(+) + ATP = ADP + NADP(+) + H(+). In terms of biological role, involved in the regulation of the intracellular balance of NAD and NADP, and is a key enzyme in the biosynthesis of NADP. Catalyzes specifically the phosphorylation on 2'-hydroxyl of the adenosine moiety of NAD to yield NADP. In Pseudomonas fluorescens (strain ATCC BAA-477 / NRRL B-23932 / Pf-5), this protein is NAD kinase.